Here is a 314-residue protein sequence, read N- to C-terminus: Nodulation protein D 1 (314 aa).

An HTH lysR-type domain is found at 6-63 (LDLNLLVALDALMTERNLTAAARQINLSQPAMSAAIARLRSYFRDELFTMRGRELVPT). Residues 23-42 (LTAAARQINLSQPAMSAAIA) constitute a DNA-binding region (H-T-H motif).

This sequence belongs to the LysR transcriptional regulatory family.

In terms of biological role, nodD regulates the expression of the nodABCFE genes which encode other nodulation proteins. NodD is also a negative regulator of its own expression. Binds flavonoids as inducers. The sequence is that of Nodulation protein D 1 (nodD1) from Bradyrhizobium elkanii.